A 562-amino-acid chain; its full sequence is Nucleoprotein (562 aa).

The interval 53 to 238 is binding site for the cap structure m7GTP; that stretch reads MRRERRDDND…ITQEESQINI (186 aa). Residues Asp381 and Glu383 each contribute to the Mn(2+) site. Zn(2+) is bound by residues Glu391, Cys498, His501, and Cys522. Residue Asp526 coordinates Mn(2+).

It belongs to the arenaviridae nucleocapsid protein family. As to quaternary structure, homomultimerizes to form the nucleocapsid. Binds to viral genomic RNA. Interacts with glycoprotein G2. Interacts with protein Z; this interaction probably directs the encapsidated genome to budding sites. Interacts with protein L; this interaction does not interfere with Z-L interaction. Interacts with host IKBKE (via Protein kinase domain); the interaction inhibits IKBKE kinase activity.

It localises to the virion. The protein localises to the host cytoplasm. Encapsidates the genome, protecting it from nucleases. The encapsidated genomic RNA is termed the nucleocapsid (NC). Serves as template for viral transcription and replication. The increased presence of protein N in host cell does not seem to trigger the switch from transcription to replication as observed in other negative strain RNA viruses. Through the interaction with host IKBKE, strongly inhibits the phosphorylation and nuclear translocation of host IRF3, a protein involved in interferon activation pathway, leading to the inhibition of interferon-beta and IRF3-dependent promoters activation. Also encodes a functional 3'-5' exoribonuclease that degrades preferentially dsRNA substrates and thereby participates in the suppression of interferon induction. The polypeptide is Nucleoprotein (Tamiami mammarenavirus (isolate Rat/United States/W 10777/1964) (TAMV)).